The chain runs to 373 residues: tRNA-specific 2-thiouridylase MnmA (373 aa).

ATP-binding positions include 12–19 and Met38; that span reads GMSGGVDS. The interaction with target base in tRNA stretch occupies residues 98–100; sequence NPD. Cys103 functions as the Nucleophile in the catalytic mechanism. The cysteines at positions 103 and 200 are disulfide-linked. Gly127 serves as a coordination point for ATP. Residues 150 to 152 are interaction with tRNA; the sequence is KDQ. Cys200 functions as the Cysteine persulfide intermediate in the catalytic mechanism. The segment at 312 to 313 is interaction with tRNA; the sequence is RY.

Belongs to the MnmA/TRMU family.

Its subcellular location is the cytoplasm. The enzyme catalyses S-sulfanyl-L-cysteinyl-[protein] + uridine(34) in tRNA + AH2 + ATP = 2-thiouridine(34) in tRNA + L-cysteinyl-[protein] + A + AMP + diphosphate + H(+). Its function is as follows. Catalyzes the 2-thiolation of uridine at the wobble position (U34) of tRNA, leading to the formation of s(2)U34. The chain is tRNA-specific 2-thiouridylase MnmA from Streptococcus pyogenes serotype M28 (strain MGAS6180).